The sequence spans 440 residues: Thymidine phosphorylase (440 aa).

Belongs to the thymidine/pyrimidine-nucleoside phosphorylase family. In terms of assembly, homodimer.

The catalysed reaction is thymidine + phosphate = 2-deoxy-alpha-D-ribose 1-phosphate + thymine. Its pathway is pyrimidine metabolism; dTMP biosynthesis via salvage pathway; dTMP from thymine: step 1/2. Its function is as follows. The enzymes which catalyze the reversible phosphorolysis of pyrimidine nucleosides are involved in the degradation of these compounds and in their utilization as carbon and energy sources, or in the rescue of pyrimidine bases for nucleotide synthesis. This Enterobacter sp. (strain 638) protein is Thymidine phosphorylase.